We begin with the raw amino-acid sequence, 296 residues long: uncharacterized protein (296 aa).

Transmembrane regions (helical) follow at residues 82–102 and 117–137; these read VVAP…WSVQ and ISVL…SAIF.

It localises to the cell membrane. This is an uncharacterized protein from Sinorhizobium fredii (strain NBRC 101917 / NGR234).